We begin with the raw amino-acid sequence, 270 residues long: Fluoride-specific ion channel FluC 2 (270 aa).

Transmembrane regions (helical) follow at residues 4–24 (IIILVVIGGAFGAMTREFIML), 35–55 (LDILVANVVACFLLGTVTALY), 67–87 (IIGTGMMGGVSTFSSFAYGSV), and 96–116 (AFLIAAAYVTVSVVAGYVAVL). The Na(+) site is built by G74 and S77.

This sequence belongs to the fluoride channel Fluc/FEX (TC 1.A.43) family.

The protein resides in the cell inner membrane. It catalyses the reaction fluoride(in) = fluoride(out). Its activity is regulated as follows. Na(+) is not transported, but it plays an essential structural role and its presence is essential for fluoride channel function. Functionally, fluoride-specific ion channel. Important for reducing fluoride concentration in the cell, thus reducing its toxicity. This is Fluoride-specific ion channel FluC 2 from Brucella melitensis biotype 1 (strain ATCC 23456 / CCUG 17765 / NCTC 10094 / 16M).